The chain runs to 333 residues: Ketol-acid reductoisomerase (NADP(+)) (333 aa).

A KARI N-terminal Rossmann domain is found at 6–186; that stretch reads TRVYTECDAD…GALRAGAIQT (181 aa). Residues 29 to 32, lysine 52, serine 55, serine 57, and 87 to 90 each bind NADP(+); these read YGSQ and DPAQ. Histidine 112 is an active-site residue. Glycine 138 is a binding site for NADP(+). The KARI C-terminal knotted domain maps to 187-332; sequence TFTEETETDL…ARLRALFSWS (146 aa). Mg(2+) contacts are provided by aspartate 195, glutamate 199, glutamate 231, and glutamate 235. Serine 256 provides a ligand contact to substrate.

The protein belongs to the ketol-acid reductoisomerase family. The cofactor is Mg(2+).

The catalysed reaction is (2R)-2,3-dihydroxy-3-methylbutanoate + NADP(+) = (2S)-2-acetolactate + NADPH + H(+). It carries out the reaction (2R,3R)-2,3-dihydroxy-3-methylpentanoate + NADP(+) = (S)-2-ethyl-2-hydroxy-3-oxobutanoate + NADPH + H(+). The protein operates within amino-acid biosynthesis; L-isoleucine biosynthesis; L-isoleucine from 2-oxobutanoate: step 2/4. It functions in the pathway amino-acid biosynthesis; L-valine biosynthesis; L-valine from pyruvate: step 2/4. Involved in the biosynthesis of branched-chain amino acids (BCAA). Catalyzes an alkyl-migration followed by a ketol-acid reduction of (S)-2-acetolactate (S2AL) to yield (R)-2,3-dihydroxy-isovalerate. In the isomerase reaction, S2AL is rearranged via a Mg-dependent methyl migration to produce 3-hydroxy-3-methyl-2-ketobutyrate (HMKB). In the reductase reaction, this 2-ketoacid undergoes a metal-dependent reduction by NADPH to yield (R)-2,3-dihydroxy-isovalerate. In Tropheryma whipplei (strain Twist) (Whipple's bacillus), this protein is Ketol-acid reductoisomerase (NADP(+)).